Here is a 182-residue protein sequence, read N- to C-terminus: Ribosome maturation factor RimM (182 aa).

The 80-residue stretch at 103–182 (EDEFYWRELF…RIEVDWDPGF (80 aa)) folds into the PRC barrel domain.

This sequence belongs to the RimM family. Binds ribosomal protein uS19.

The protein localises to the cytoplasm. An accessory protein needed during the final step in the assembly of 30S ribosomal subunit, possibly for assembly of the head region. Essential for efficient processing of 16S rRNA. May be needed both before and after RbfA during the maturation of 16S rRNA. It has affinity for free ribosomal 30S subunits but not for 70S ribosomes. This is Ribosome maturation factor RimM from Vibrio campbellii (strain ATCC BAA-1116).